Consider the following 317-residue polypeptide: Long form salivary protein D7L2 (317 aa).

Residues 1 to 20 form the signal peptide; it reads MYKLLVALHLILCTVSHVKT. 5 disulfide bridges follow: cysteine 39-cysteine 76, cysteine 72-cysteine 131, cysteine 181-cysteine 214, cysteine 195-cysteine 316, and cysteine 255-cysteine 266. Tryptophan 58 and tyrosine 73 together coordinate thromboxane A2. Serotonin contacts are provided by glutamate 182, tyrosine 264, aspartate 281, aspartate 284, and methionine 308.

The protein belongs to the PBP/GOBP family. Female salivary gland.

The protein localises to the secreted. Functionally, modulates blood feeding of female mosquitoes on vertebrate species by binding and sequestering different mediators involved in the host response, such as biogenic amines and eicosanoids. Binds serotonin with high affinity. Binds tryptamine, octopamine, dopamine and noradrenaline with low affinity. Binds leukotriene C4, leukotriene D4, leukotriene E4 and U-46619, a stable analog of thromboxane A2. Does not bind leukotriene B4, adrenaline, histamine and ADP. Inhibits platelet aggregation induced by low concentrations of collagen and arachidonic acid but not by ADP or adrenaline. The protein is Long form salivary protein D7L2 of Anopheles darlingi (Mosquito).